Here is a 224-residue protein sequence, read N- to C-terminus: Adenylate kinase (224 aa).

10–15 serves as a coordination point for ATP; the sequence is GSGKGT. Residues 30 to 59 form an NMP region; the sequence is ESGAIFRENISKGTELGAKAKEYIDRGDLV. Residues Ser31, Arg36, 57 to 59, 85 to 88, and Gln92 contribute to the AMP site; these read DLV and GFPR. The segment at 126–165 is LID; the sequence is GRRLCVNDNNHPNNIFIDAIKPDGDKCRVCGGELKTRSDD. Residue Arg127 coordinates ATP. Residues Arg162 and Arg174 each contribute to the AMP site. Pro211 lines the ATP pocket.

Belongs to the adenylate kinase family. In terms of assembly, monomer.

The protein resides in the cytoplasm. The enzyme catalyses AMP + ATP = 2 ADP. It functions in the pathway purine metabolism; AMP biosynthesis via salvage pathway; AMP from ADP: step 1/1. In terms of biological role, catalyzes the reversible transfer of the terminal phosphate group between ATP and AMP. Plays an important role in cellular energy homeostasis and in adenine nucleotide metabolism. The chain is Adenylate kinase from Desulfosudis oleivorans (strain DSM 6200 / JCM 39069 / Hxd3) (Desulfococcus oleovorans).